We begin with the raw amino-acid sequence, 384 residues long: Odorant receptor 46a, isoform B (384 aa).

The Cytoplasmic segment spans residues 1–37; it reads MVTEDFYKYQVWYFQILGVWQLPTWAADHQRRFQSMR. Residues 38 to 58 traverse the membrane as a helical segment; the sequence is FGFILVILFIMLLLFSFEMLN. N-linked (GlcNAc...) asparagine glycosylation occurs at N59. Over 59-65 the chain is Extracellular; that stretch reads NISQVRE. A helical membrane pass occupies residues 66–86; it reads ILKVFFMFATEISCMAKLLHL. The Cytoplasmic portion of the chain corresponds to 87–130; it reads KLKSRKLAGLVDAMLSPEFGVKSEQEMQMLELDRVAVVRMRNSY. The chain crosses the membrane as a helical span at residues 131-151; the sequence is GIMSLGAASLILIVPCFDNFG. At 152–165 the chain is on the extracellular side; the sequence is ELPLAMLEVCSIEG. A helical membrane pass occupies residues 166-186; it reads WICYWSQYLFHSICLLPTCVL. The Cytoplasmic portion of the chain corresponds to 187–247; that stretch reads NITYDSVAYS…YNRIVRFKDL (61 aa). A helical membrane pass occupies residues 248-268; it reads VELFIKGPGSVQLMCSVLVLV. The Extracellular segment spans residues 269–283; sequence SNLYDMSTMSIANGD. Residues 284–304 traverse the membrane as a helical segment; it reads AIFMLKTCIYQLVMLWQIFII. Residues 305–348 are Cytoplasmic-facing; sequence CYASNEVTVQSSRLCHSIYSSQWTGWNRANRRIVLLMMQRFNSP. Residues 349-369 form a helical membrane-spanning segment; it reads MLLSTFNPTFAFSLEAFGSIV. N370 carries N-linked (GlcNAc...) asparagine glycosylation. Topologically, residues 370 to 384 are extracellular; the sequence is NCSYSYFALLKRVNS.

This sequence belongs to the insect chemoreceptor superfamily. Heteromeric odorant receptor channel (TC 1.A.69) family. Or2a subfamily. Interacts with Orco. Complexes exist early in the endomembrane system in olfactory sensory neurons (OSNs), coupling these complexes to the conserved ciliary trafficking pathway. In terms of tissue distribution, isoform B is expressed in the antenna.

It localises to the cell membrane. Its function is as follows. Odorant receptor which mediates acceptance or avoidance behavior, depending on its substrates. The odorant receptor repertoire encodes a large collection of odor stimuli that vary widely in identity, intensity, and duration. May form a complex with Orco to form odorant-sensing units, providing sensitive and prolonged odorant signaling and calcium permeability. This is Odorant receptor 46a, isoform B (Or46a) from Drosophila melanogaster (Fruit fly).